The chain runs to 133 residues: Putative HTH-type transcriptional regulator YwnA (133 aa).

In terms of domain architecture, HTH rrf2-type spans 1 to 130; sequence MINSRLAVAI…ASKSLKDVMN (130 aa). Residues 24–47 constitute a DNA-binding region (H-T-H motif); that stretch reads SEIIADSVNTNPVVVRRMISLLKK.

The chain is Putative HTH-type transcriptional regulator YwnA (ywnA) from Bacillus subtilis (strain 168).